A 140-amino-acid chain; its full sequence is Profilin (140 aa).

Ser-2 is subject to N-acetylserine.

This sequence belongs to the profilin family. Occurs in many kinds of cells as a complex with monomeric actin in a 1:1 ratio.

It is found in the cytoplasm. The protein resides in the cytoskeleton. Functionally, binds to actin and affects the structure of the cytoskeleton. At high concentrations, profilin prevents the polymerization of actin, whereas it enhances it at low concentrations. By binding to PIP2, it inhibits the formation of IP3 and DG. The chain is Profilin from Heliocidaris crassispina (Sea urchin).